A 266-amino-acid chain; its full sequence is 4-hydroxy-tetrahydrodipicolinate reductase (266 aa).

Residues 7-12 (GTIGRM), E33, 96-98 (GTT), and 120-123 (APNM) contribute to the NAD(+) site. H153 functions as the Proton donor/acceptor in the catalytic mechanism. Residue H154 coordinates (S)-2,3,4,5-tetrahydrodipicolinate. The active-site Proton donor is K157. Residue 163–164 (GT) coordinates (S)-2,3,4,5-tetrahydrodipicolinate.

Belongs to the DapB family.

The protein localises to the cytoplasm. The enzyme catalyses (S)-2,3,4,5-tetrahydrodipicolinate + NAD(+) + H2O = (2S,4S)-4-hydroxy-2,3,4,5-tetrahydrodipicolinate + NADH + H(+). It carries out the reaction (S)-2,3,4,5-tetrahydrodipicolinate + NADP(+) + H2O = (2S,4S)-4-hydroxy-2,3,4,5-tetrahydrodipicolinate + NADPH + H(+). It functions in the pathway amino-acid biosynthesis; L-lysine biosynthesis via DAP pathway; (S)-tetrahydrodipicolinate from L-aspartate: step 4/4. Its function is as follows. Catalyzes the conversion of 4-hydroxy-tetrahydrodipicolinate (HTPA) to tetrahydrodipicolinate. The polypeptide is 4-hydroxy-tetrahydrodipicolinate reductase (Polynucleobacter necessarius subsp. necessarius (strain STIR1)).